Here is a 539-residue protein sequence, read N- to C-terminus: Chaperonin GroEL (539 aa).

Residues 30-33, Lys-51, 87-91, Gly-415, 479-481, and Asp-495 each bind ATP; these read TLGP, DGTTT, and NAA.

The protein belongs to the chaperonin (HSP60) family. Forms a cylinder of 14 subunits composed of two heptameric rings stacked back-to-back. Interacts with the co-chaperonin GroES.

The protein localises to the cytoplasm. It carries out the reaction ATP + H2O + a folded polypeptide = ADP + phosphate + an unfolded polypeptide.. Together with its co-chaperonin GroES, plays an essential role in assisting protein folding. The GroEL-GroES system forms a nano-cage that allows encapsulation of the non-native substrate proteins and provides a physical environment optimized to promote and accelerate protein folding. The protein is Chaperonin GroEL of Enterobacter agglomerans (Erwinia herbicola).